The following is a 132-amino-acid chain: Large ribosomal subunit protein uL14 (132 aa).

This sequence belongs to the universal ribosomal protein uL14 family. Part of the 50S ribosomal subunit. Forms a cluster with proteins L3 and L24e, part of which may contact the 16S rRNA in 2 intersubunit bridges.

In terms of biological role, binds to 23S rRNA. Forms part of two intersubunit bridges in the 70S ribosome. This chain is Large ribosomal subunit protein uL14, found in Methanospirillum hungatei JF-1 (strain ATCC 27890 / DSM 864 / NBRC 100397 / JF-1).